Consider the following 163-residue polypeptide: Meiotically up-regulated gene 109 protein (163 aa).

The next 4 helical transmembrane spans lie at 61–78 (YRFY…FFIW), 82–104 (ALLA…SLTI), 114–134 (YSIP…APVG), and 136–156 (LFWS…LTTY).

The protein localises to the membrane. Functionally, has a role in meiosis. In Schizosaccharomyces pombe (strain 972 / ATCC 24843) (Fission yeast), this protein is Meiotically up-regulated gene 109 protein (mug109).